We begin with the raw amino-acid sequence, 116 residues long: PTS system N,N'-diacetylchitobiose-specific EIIA component (116 aa).

A PTS EIIA type-3 domain is found at 15–113; sequence EELEEVVMGL…ITELIELHEK (99 aa). The active-site Tele-phosphohistidine intermediate is the H89. Phosphohistidine; by HPr is present on H89.

Forms a complex with ChbB (EIIB). ChbA is a homotrimer. The cofactor is Mg(2+).

The protein resides in the cytoplasm. The phosphoenolpyruvate-dependent sugar phosphotransferase system (sugar PTS), a major carbohydrate active transport system, catalyzes the phosphorylation of incoming sugar substrates concomitantly with their translocation across the cell membrane. The enzyme II ChbABC PTS system is involved in the transport of the chitin disaccharide N,N'-diacetylchitobiose (GlcNAc2). The chain is PTS system N,N'-diacetylchitobiose-specific EIIA component (chbA) from Escherichia coli O157:H7.